The primary structure comprises 300 residues: 7-methylguanosine phosphate-specific 5'-nucleotidase (300 aa).

Asp41 (nucleophile) is an active-site residue. Mg(2+) is bound by residues Asp41 and Asp43. The active-site Proton donor is Asp43. Glu88 serves as a coordination point for CMP. Residue Glu88 coordinates N(7)-methyl-GMP. Residues 156 to 157 (SA) and Lys205 each bind substrate. Asp230 contacts Mg(2+). Lys256 bears the N6-acetyllysine mark.

Belongs to the pyrimidine 5'-nucleotidase family. In terms of assembly, monomer.

It is found in the cytoplasm. It carries out the reaction N(7)-methyl-GMP + H2O = N(7)-methylguanosine + phosphate. The enzyme catalyses CMP + H2O = cytidine + phosphate. The catalysed reaction is a ribonucleoside 5'-phosphate + H2O = a ribonucleoside + phosphate. Its function is as follows. Specifically hydrolyzes 7-methylguanosine monophosphate (m(7)GMP) to 7-methylguanosine and inorganic phosphate. The specific activity for m(7)GMP may protect cells against undesired salvage of m(7)GMP and its incorporation into nucleic acids. Also has weak activity for CMP. UMP and purine nucleotides are poor substrates. This chain is 7-methylguanosine phosphate-specific 5'-nucleotidase (NT5C3B), found in Homo sapiens (Human).